The sequence spans 153 residues: Arachidonate 5-lipoxygenase-activating protein (153 aa).

Residues 1-8 (MDQETVGN) lie on the Lumenal side of the membrane. The helical transmembrane segment at 9-30 (IVLLAIVTLISVVQNGFFAHKV) threads the bilayer. The Cytoplasmic segment spans residues 31–52 (EHESKTHNGRSFQRTGPLAFER). A helical membrane pass occupies residues 53–77 (VYTANQNCVDAYPTFLVMLWSAGLL). At 78-80 (CSQ) the chain is on the lumenal side. The helical transmembrane segment at 81–102 (VPAAFAGLMYLFVRQKYFVGYL) threads the bilayer. Residues 103 to 107 (GERTQ) are Cytoplasmic-facing. The stretch at 108 to 115 (STPGYIFG) is an intramembrane region. Residues 116–128 (KRIILFLFAMSLA) traverse the membrane as a helical segment. At 129–153 (GILNYFLIAFFGSDFENYIKTVTTT) the chain is on the lumenal side.

Belongs to the MAPEG family. Homotrimer. Interacts with LTC4S and ALOX5.

Its subcellular location is the nucleus membrane. The protein resides in the endoplasmic reticulum membrane. Functionally, required for leukotriene biosynthesis by ALOX5 (5-lipoxygenase). Anchors ALOX5 to the membrane. Binds arachidonic acid, and could play an essential role in the transfer of arachidonic acid to ALOX5. Binds to MK-886, a compound that blocks the biosynthesis of leukotrienes. The chain is Arachidonate 5-lipoxygenase-activating protein (ALOX5AP) from Ovis aries (Sheep).